The sequence spans 456 residues: Bifunctional protein GlmU (456 aa).

The interval 1 to 229 (MLNSAMSVVI…ISETDGVNNR (229 aa)) is pyrophosphorylase. Residues 11 to 14 (LAAG), Lys-25, Gln-76, 81 to 82 (GT), 103 to 105 (YGD), Gly-140, Glu-154, Asn-169, and Asn-227 each bind UDP-N-acetyl-alpha-D-glucosamine. Asp-105 lines the Mg(2+) pocket. Mg(2+) is bound at residue Asn-227. Residues 230-250 (LQLSRLERIYQAEQAEKLLLS) are linker. The segment at 251 to 456 (GVMLRDPARF…QGWQRPVKKK (206 aa)) is N-acetyltransferase. Residues Arg-333 and Lys-351 each contribute to the UDP-N-acetyl-alpha-D-glucosamine site. Catalysis depends on His-363, which acts as the Proton acceptor. UDP-N-acetyl-alpha-D-glucosamine is bound by residues Tyr-366 and Asn-377. Acetyl-CoA-binding positions include Ala-380, 386 to 387 (NY), Ser-405, Ala-423, and Arg-440.

It in the N-terminal section; belongs to the N-acetylglucosamine-1-phosphate uridyltransferase family. This sequence in the C-terminal section; belongs to the transferase hexapeptide repeat family. Homotrimer. Mg(2+) serves as cofactor.

It localises to the cytoplasm. It carries out the reaction alpha-D-glucosamine 1-phosphate + acetyl-CoA = N-acetyl-alpha-D-glucosamine 1-phosphate + CoA + H(+). The enzyme catalyses N-acetyl-alpha-D-glucosamine 1-phosphate + UTP + H(+) = UDP-N-acetyl-alpha-D-glucosamine + diphosphate. It participates in nucleotide-sugar biosynthesis; UDP-N-acetyl-alpha-D-glucosamine biosynthesis; N-acetyl-alpha-D-glucosamine 1-phosphate from alpha-D-glucosamine 6-phosphate (route II): step 2/2. Its pathway is nucleotide-sugar biosynthesis; UDP-N-acetyl-alpha-D-glucosamine biosynthesis; UDP-N-acetyl-alpha-D-glucosamine from N-acetyl-alpha-D-glucosamine 1-phosphate: step 1/1. The protein operates within bacterial outer membrane biogenesis; LPS lipid A biosynthesis. In terms of biological role, catalyzes the last two sequential reactions in the de novo biosynthetic pathway for UDP-N-acetylglucosamine (UDP-GlcNAc). The C-terminal domain catalyzes the transfer of acetyl group from acetyl coenzyme A to glucosamine-1-phosphate (GlcN-1-P) to produce N-acetylglucosamine-1-phosphate (GlcNAc-1-P), which is converted into UDP-GlcNAc by the transfer of uridine 5-monophosphate (from uridine 5-triphosphate), a reaction catalyzed by the N-terminal domain. This is Bifunctional protein GlmU from Salmonella typhi.